An 87-amino-acid polypeptide reads, in one-letter code: Protein Tat (87 aa).

A disordered region spans residues 1-21 (MDPVDPNLEPWNHPGSQPRTP). Residues 1–24 (MDPVDPNLEPWNHPGSQPRTPCNK) form an interaction with human CREBBP region. The tract at residues 1 to 48 (MDPVDPNLEPWNHPGSQPRTPCNKCYCKKCCYHCQMCFITKGLGISYG) is transactivation. Residues cysteine 22, cysteine 25, and cysteine 27 each coordinate Zn(2+). The segment at 22–37 (CNKCYCKKCCYHCQMC) is cysteine-rich. Lysine 28 is subject to N6-acetyllysine; by host PCAF. Residues cysteine 30, histidine 33, cysteine 34, and cysteine 37 each coordinate Zn(2+). The core stretch occupies residues 38–48 (FITKGLGISYG). The segment at 45–87 (ISYGRKKRRQRRRPPQGNQAHQDPLPEQPSSQHRGDHPTGPKE) is disordered. Residues 48–58 (GRKKRRQRRRP) show a composition bias toward basic residues. Residues 49–57 (RKKRRQRRR) carry the Nuclear localization signal, RNA-binding (TAR), and protein transduction motif. The interaction with the host capping enzyme RNGTT stretch occupies residues 49–87 (RKKRRQRRRPPQGNQAHQDPLPEQPSSQHRGDHPTGPKE). An N6-acetyllysine; by host EP300 and GCN5L2 mark is found at lysine 50 and lysine 51. Asymmetric dimethylarginine; by host PRMT6 occurs at positions 52 and 53. A compositionally biased stretch (basic and acidic residues) spans 77–87 (HRGDHPTGPKE). The short motif at 78-80 (RGD) is the Cell attachment site element.

Belongs to the lentiviruses Tat family. As to quaternary structure, interacts with host CCNT1. Associates with the P-TEFb complex composed at least of Tat, P-TEFb (CDK9 and CCNT1), TAR RNA, RNA Pol II. Recruits the HATs CREBBP, TAF1/TFIID, EP300, PCAF and GCN5L2. Interacts with host KAT5/Tip60; this interaction targets the latter to degradation. Interacts with the host deacetylase SIRT1. Interacts with host capping enzyme RNGTT; this interaction stimulates RNGTT. Binds to host KDR, and to the host integrins ITGAV/ITGB3 and ITGA5/ITGB1. Interacts with host KPNB1/importin beta-1 without previous binding to KPNA1/importin alpha-1. Interacts with EIF2AK2. Interacts with host nucleosome assembly protein NAP1L1; this interaction may be required for the transport of Tat within the nucleus, since the two proteins interact at the nuclear rim. Interacts with host C1QBP/SF2P32; this interaction involves lysine-acetylated Tat. Interacts with the host chemokine receptors CCR2, CCR3 and CXCR4. Interacts with host DPP4/CD26; this interaction may trigger an anti-proliferative effect. Interacts with host LDLR. Interacts with the host extracellular matrix metalloproteinase MMP1. Interacts with host PRMT6; this interaction mediates Tat's methylation. Interacts with, and is ubiquitinated by MDM2/Hdm2. Interacts with host PSMC3 and HTATIP2. Interacts with STAB1; this interaction may overcome SATB1-mediated repression of IL2 and IL2RA (interleukin) in T cells by binding to the same domain than HDAC1. Interacts (when acetylated) with human CDK13, thereby increasing HIV-1 mRNA splicing and promoting the production of the doubly spliced HIV-1 protein Nef. Interacts with host TBP; this interaction modulates the activity of transcriptional pre-initiation complex. Interacts with host RELA. Interacts with host PLSCR1; this interaction negatively regulates Tat transactivation activity by altering its subcellular distribution. Post-translationally, asymmetrical arginine methylation by host PRMT6 seems to diminish the transactivation capacity of Tat and affects the interaction with host CCNT1. In terms of processing, acetylation by EP300, CREBBP, GCN5L2/GCN5 and PCAF regulates the transactivation activity of Tat. EP300-mediated acetylation of Lys-50 promotes dissociation of Tat from the TAR RNA through the competitive binding to PCAF's bromodomain. In addition, the non-acetylated Tat's N-terminus can also interact with PCAF. PCAF-mediated acetylation of Lys-28 enhances Tat's binding to CCNT1. Lys-50 is deacetylated by SIRT1. Polyubiquitination by host MDM2 does not target Tat to degradation, but activates its transactivation function and fosters interaction with CCNT1 and TAR RNA. Post-translationally, phosphorylated by EIF2AK2 on serine and threonine residues adjacent to the basic region important for TAR RNA binding and function. Phosphorylation of Tat by EIF2AK2 is dependent on the prior activation of EIF2AK2 by dsRNA.

It localises to the host nucleus. The protein resides in the host nucleolus. It is found in the host cytoplasm. Its subcellular location is the secreted. In terms of biological role, transcriptional activator that increases RNA Pol II processivity, thereby increasing the level of full-length viral transcripts. Recognizes a hairpin structure at the 5'-LTR of the nascent viral mRNAs referred to as the transactivation responsive RNA element (TAR) and recruits the cyclin T1-CDK9 complex (P-TEFb complex) that will in turn hyperphosphorylate the RNA polymerase II to allow efficient elongation. The CDK9 component of P-TEFb and other Tat-activated kinases hyperphosphorylate the C-terminus of RNA Pol II that becomes stabilized and much more processive. Other factors such as HTATSF1/Tat-SF1, SUPT5H/SPT5, and HTATIP2 are also important for Tat's function. Besides its effect on RNA Pol II processivity, Tat induces chromatin remodeling of proviral genes by recruiting the histone acetyltransferases (HATs) CREBBP, EP300 and PCAF to the chromatin. This also contributes to the increase in proviral transcription rate, especially when the provirus integrates in transcriptionally silent region of the host genome. To ensure maximal activation of the LTR, Tat mediates nuclear translocation of NF-kappa-B by interacting with host RELA. Through its interaction with host TBP, Tat may also modulate transcription initiation. Tat can reactivate a latently infected cell by penetrating in it and transactivating its LTR promoter. In the cytoplasm, Tat is thought to act as a translational activator of HIV-1 mRNAs. Its function is as follows. Extracellular circulating Tat can be endocytosed by surrounding uninfected cells via the binding to several surface receptors such as CD26, CXCR4, heparan sulfate proteoglycans (HSPG) or LDLR. Neurons are rarely infected, but they internalize Tat via their LDLR. Through its interaction with nuclear HATs, Tat is potentially able to control the acetylation-dependent cellular gene expression. Modulates the expression of many cellular genes involved in cell survival, proliferation or in coding for cytokines or cytokine receptors. Tat plays a role in T-cell and neurons apoptosis. Tat induced neurotoxicity and apoptosis probably contribute to neuroAIDS. Circulating Tat also acts as a chemokine-like and/or growth factor-like molecule that binds to specific receptors on the surface of the cells, affecting many cellular pathways. In the vascular system, Tat binds to ITGAV/ITGB3 and ITGA5/ITGB1 integrins dimers at the surface of endothelial cells and competes with bFGF for heparin-binding sites, leading to an excess of soluble bFGF. The polypeptide is Protein Tat (Homo sapiens (Human)).